A 446-amino-acid chain; its full sequence is Phosphoglucosamine mutase (446 aa).

The active-site Phosphoserine intermediate is the S99. Mg(2+) is bound by residues S99, D242, D244, and D246. Position 99 is a phosphoserine (S99).

The protein belongs to the phosphohexose mutase family. Mg(2+) serves as cofactor. Activated by phosphorylation.

The enzyme catalyses alpha-D-glucosamine 1-phosphate = D-glucosamine 6-phosphate. Functionally, catalyzes the conversion of glucosamine-6-phosphate to glucosamine-1-phosphate. The protein is Phosphoglucosamine mutase of Wolinella succinogenes (strain ATCC 29543 / DSM 1740 / CCUG 13145 / JCM 31913 / LMG 7466 / NCTC 11488 / FDC 602W) (Vibrio succinogenes).